The primary structure comprises 206 residues: Putative type I restriction enzyme MpnIIP endonuclease subunit C-terminal part (206 aa).

Functionally, the C-terminal section of a putative type I restriction enzyme that if reconstituted might recognize 5'-GAN(7)TAY-3' and cleave a random distance away. Subunit R is required for both nuclease and ATPase activities, but not for modification. This Mycoplasma pneumoniae (strain ATCC 29342 / M129 / Subtype 1) (Mycoplasmoides pneumoniae) protein is Putative type I restriction enzyme MpnIIP endonuclease subunit C-terminal part.